A 131-amino-acid chain; its full sequence is D-ribose pyranase (131 aa).

Histidine 20 serves as the catalytic Proton donor. Substrate contacts are provided by residues aspartate 28, histidine 98, and 120–122; that span reads YAN.

The protein belongs to the RbsD / FucU family. RbsD subfamily. In terms of assembly, homodecamer.

It is found in the cytoplasm. The catalysed reaction is beta-D-ribopyranose = beta-D-ribofuranose. The protein operates within carbohydrate metabolism; D-ribose degradation; D-ribose 5-phosphate from beta-D-ribopyranose: step 1/2. Its function is as follows. Catalyzes the interconversion of beta-pyran and beta-furan forms of D-ribose. The polypeptide is D-ribose pyranase (Clostridium perfringens (strain 13 / Type A)).